The primary structure comprises 304 residues: UDP-N-acetylenolpyruvoylglucosamine reductase (304 aa).

The FAD-binding PCMH-type domain occupies Ile-33 to Gly-198. Arg-177 is an active-site residue. The Proton donor role is filled by Ser-227. Glu-297 is a catalytic residue.

It belongs to the MurB family. FAD is required as a cofactor.

It is found in the cytoplasm. It catalyses the reaction UDP-N-acetyl-alpha-D-muramate + NADP(+) = UDP-N-acetyl-3-O-(1-carboxyvinyl)-alpha-D-glucosamine + NADPH + H(+). Its pathway is cell wall biogenesis; peptidoglycan biosynthesis. Cell wall formation. The sequence is that of UDP-N-acetylenolpyruvoylglucosamine reductase from Alkaliphilus metalliredigens (strain QYMF).